Reading from the N-terminus, the 430-residue chain is Tol-Pal system protein TolB (430 aa).

A signal peptide spans methionine 1 to alanine 26.

The protein belongs to the TolB family. As to quaternary structure, the Tol-Pal system is composed of five core proteins: the inner membrane proteins TolA, TolQ and TolR, the periplasmic protein TolB and the outer membrane protein Pal. They form a network linking the inner and outer membranes and the peptidoglycan layer.

It localises to the periplasm. Part of the Tol-Pal system, which plays a role in outer membrane invagination during cell division and is important for maintaining outer membrane integrity. The sequence is that of Tol-Pal system protein TolB from Paraburkholderia phytofirmans (strain DSM 17436 / LMG 22146 / PsJN) (Burkholderia phytofirmans).